We begin with the raw amino-acid sequence, 389 residues long: tRNA N(3)-cytidine methyltransferase METTL2 (389 aa).

The disordered stretch occupies residues 1–20 (MAASFPEGVPETEDGKRPQF). 7 residues coordinate S-adenosyl-L-methionine: tryptophan 78, tyrosine 82, glycine 181, aspartate 206, aspartate 232, leucine 233, and isoleucine 253.

This sequence belongs to the methyltransferase superfamily. METL family. In terms of assembly, monomer. Interacts with DALRD3.

The protein localises to the cytoplasm. The enzyme catalyses cytidine(32) in tRNA(Thr) + S-adenosyl-L-methionine = N(3)-methylcytidine(32) in tRNA(Thr) + S-adenosyl-L-homocysteine + H(+). It catalyses the reaction cytidine(32) in tRNA(Arg)(CCU) + S-adenosyl-L-methionine = N(3)-methylcytidine(32) in tRNA(Arg)(CCU) + S-adenosyl-L-homocysteine + H(+). S-adenosyl-L-methionine-dependent methyltransferase that mediates N(3)-methylcytidine modification of residue 32 of the tRNA anticodon loop of tRNA(Thr)(UGU) and tRNA(Arg)(CCU). N(3)-methylcytidine methylation by METTL2 requires the N6-threonylcarbamoylation of tRNA (t6A37) by the EKC/KEOPS complex as prerequisite. The protein is tRNA N(3)-cytidine methyltransferase METTL2 of Mus musculus (Mouse).